Here is a 39-residue protein sequence, read N- to C-terminus: Photosystem II reaction center protein Psb30 (39 aa).

A helical transmembrane segment spans residues 12 to 32 (IFQLTFVALIMLAGPFVIFLL).

Belongs to the Psb30/Ycf12 family. As to quaternary structure, PSII is composed of 1 copy each of membrane proteins PsbA, PsbB, PsbC, PsbD, PsbE, PsbF, PsbH, PsbI, PsbJ, PsbK, PsbL, PsbM, PsbT, PsbX, PsbY, PsbZ, Psb30/Ycf12, peripheral proteins PsbO, CyanoQ (PsbQ), PsbU, PsbV and a large number of cofactors. It forms dimeric complexes.

The protein resides in the cellular thylakoid membrane. In terms of biological role, a core subunit of photosystem II (PSII), probably helps stabilize the reaction center. In Microcystis aeruginosa (strain NIES-843 / IAM M-2473), this protein is Photosystem II reaction center protein Psb30.